Reading from the N-terminus, the 198-residue chain is Transmembrane protein 17 (198 aa).

Residues Asn13 and Asn23 are each glycosylated (N-linked (GlcNAc...) asparagine). 4 helical membrane passes run 45-65, 78-98, 110-130, and 142-162; these read MSLY…IMML, FIVV…LYLG, LAGF…FLLF, and AVHI…FLTL.

It belongs to the TMEM17 family. In terms of assembly, part of the tectonic-like complex (also named B9 complex).

The protein localises to the cell projection. The protein resides in the cilium membrane. In terms of biological role, transmembrane component of the tectonic-like complex, a complex localized at the transition zone of primary cilia and acting as a barrier that prevents diffusion of transmembrane proteins between the cilia and plasma membranes. Required for ciliogenesis and sonic hedgehog/SHH signaling. The polypeptide is Transmembrane protein 17 (TMEM17) (Bos taurus (Bovine)).